The sequence spans 668 residues: tRNA 5-methylaminomethyl-2-thiouridine biosynthesis bifunctional protein MnmC (668 aa).

The interval 1-245 (MKHYSIQPAN…KREMLCGVME (245 aa)) is tRNA (mnm(5)s(2)U34)-methyltransferase. The interval 270-668 (IGGGIASALL…LLKGKAVKAG (399 aa)) is FAD-dependent cmnm(5)s(2)U34 oxidoreductase.

In the N-terminal section; belongs to the methyltransferase superfamily. tRNA (mnm(5)s(2)U34)-methyltransferase family. This sequence in the C-terminal section; belongs to the DAO family. It depends on FAD as a cofactor.

Its subcellular location is the cytoplasm. The catalysed reaction is 5-aminomethyl-2-thiouridine(34) in tRNA + S-adenosyl-L-methionine = 5-methylaminomethyl-2-thiouridine(34) in tRNA + S-adenosyl-L-homocysteine + H(+). Functionally, catalyzes the last two steps in the biosynthesis of 5-methylaminomethyl-2-thiouridine (mnm(5)s(2)U) at the wobble position (U34) in tRNA. Catalyzes the FAD-dependent demodification of cmnm(5)s(2)U34 to nm(5)s(2)U34, followed by the transfer of a methyl group from S-adenosyl-L-methionine to nm(5)s(2)U34, to form mnm(5)s(2)U34. The protein is tRNA 5-methylaminomethyl-2-thiouridine biosynthesis bifunctional protein MnmC of Escherichia coli O157:H7.